Consider the following 71-residue polypeptide: uncharacterized protein (71 aa).

Residues 20 to 32 (SSGRRQLTATQPR) show a composition bias toward polar residues. Residues 20 to 46 (SSGRRQLTATQPRSDPESQRGRTSSNR) form a disordered region.

This is an uncharacterized protein from Rhizobium leguminosarum.